Reading from the N-terminus, the 498-residue chain is Hexokinase-3 (498 aa).

A helical membrane pass occupies residues 4-24 (VAVAFAAVAVVAACSVAAVMV). A Hexokinase domain is found at 35–494 (RTVVEILKEL…SSIGSALLVA (460 aa)). The tract at residues 90–227 (TGREKGTYYA…GLDMHVAALV (138 aa)) is hexokinase small subdomain. ADP-binding residues include Gly104 and Thr105. Thr193, Lys194, Asn228, and Asp229 together coordinate D-glucose. The tract at residues 228 to 483 (NDTVGALSLG…QYVVVKAMED (256 aa)) is hexokinase large subdomain. Position 252 (Thr252) interacts with ADP. D-glucose contacts are provided by Asn255, Glu283, and Glu314. Position 448 (Gly448) interacts with ADP.

Belongs to the hexokinase family. In terms of tissue distribution, expressed in roots, emerging lateral roots, vascular tissues of cotyledons, roots and leaves, root and shoot meristems, anther filaments and funiculi of mature seeds.

Its subcellular location is the mitochondrion outer membrane. It catalyses the reaction a D-hexose + ATP = a D-hexose 6-phosphate + ADP + H(+). It carries out the reaction D-fructose + ATP = D-fructose 6-phosphate + ADP + H(+). The catalysed reaction is D-glucose + ATP = D-glucose 6-phosphate + ADP + H(+). It participates in carbohydrate metabolism; hexose metabolism. Its pathway is carbohydrate degradation; glycolysis; D-glyceraldehyde 3-phosphate and glycerone phosphate from D-glucose: step 1/4. Functionally, fructose and glucose phosphorylating enzyme. May be involved in the phosphorylation of glucose during the export from mitochondrion to cytosol. Plays a role in plant growth and development, perhaps by mediating cross-talk between glucose and hormone response pathways. Involved in root hair cell development by mediating certain aspects of cross talk between glucose and ethylene response pathways. This is Hexokinase-3 from Arabidopsis thaliana (Mouse-ear cress).